We begin with the raw amino-acid sequence, 618 residues long: Membrane protein insertase YidC (618 aa).

6 helical membrane-spanning segments follow: residues 3–23, 363–383, 439–459, 478–498, 520–540, and 545–565; these read KNTI…SFLS, WGLS…IVVF, LPML…PSAI, FITF…FCLL, PQMA…LFVL, and SGLN…MIIL.

Belongs to the OXA1/ALB3/YidC family. Type 1 subfamily. Interacts with the Sec translocase complex via SecD. Specifically interacts with transmembrane segments of nascent integral membrane proteins during membrane integration.

It localises to the cell inner membrane. In terms of biological role, required for the insertion and/or proper folding and/or complex formation of integral membrane proteins into the membrane. Involved in integration of membrane proteins that insert both dependently and independently of the Sec translocase complex, as well as at least some lipoproteins. Aids folding of multispanning membrane proteins. This Bacteroides fragilis (strain ATCC 25285 / DSM 2151 / CCUG 4856 / JCM 11019 / LMG 10263 / NCTC 9343 / Onslow / VPI 2553 / EN-2) protein is Membrane protein insertase YidC.